Here is a 346-residue protein sequence, read N- to C-terminus: UDP-3-O-acylglucosamine N-acyltransferase (346 aa).

His-240 acts as the Proton acceptor in catalysis.

The protein belongs to the transferase hexapeptide repeat family. LpxD subfamily. As to quaternary structure, homotrimer.

It catalyses the reaction a UDP-3-O-[(3R)-3-hydroxyacyl]-alpha-D-glucosamine + a (3R)-hydroxyacyl-[ACP] = a UDP-2-N,3-O-bis[(3R)-3-hydroxyacyl]-alpha-D-glucosamine + holo-[ACP] + H(+). The protein operates within bacterial outer membrane biogenesis; LPS lipid A biosynthesis. Its function is as follows. Catalyzes the N-acylation of UDP-3-O-acylglucosamine using 3-hydroxyacyl-ACP as the acyl donor. Is involved in the biosynthesis of lipid A, a phosphorylated glycolipid that anchors the lipopolysaccharide to the outer membrane of the cell. This chain is UDP-3-O-acylglucosamine N-acyltransferase, found in Phocaeicola vulgatus (strain ATCC 8482 / DSM 1447 / JCM 5826 / CCUG 4940 / NBRC 14291 / NCTC 11154) (Bacteroides vulgatus).